A 468-amino-acid polypeptide reads, in one-letter code: Sorting and assembly machinery component 50 homolog (468 aa).

The disordered stretch occupies residues 1-24; it reads MGTVHARSLDPLPMNGPDFGSHDD. Positions 44–124 constitute a POTRA domain; sequence VVVQRVHFEG…LDVTFEVTEL (81 aa).

The protein belongs to the SAM50/omp85 family. Associates with the mitochondrial contact site and cristae organizing system (MICOS) complex (also known as MINOS or MitOS complex).

It localises to the mitochondrion outer membrane. Functionally, may play a role in the maintenance of the structure of mitochondrial cristae. This Xenopus tropicalis (Western clawed frog) protein is Sorting and assembly machinery component 50 homolog (samm50).